Reading from the N-terminus, the 213-residue chain is Pyrrolidone-carboxylate peptidase (213 aa).

Residues E78, C141, and H165 contribute to the active site.

The protein belongs to the peptidase C15 family. In terms of assembly, homotetramer.

It is found in the cytoplasm. It carries out the reaction Release of an N-terminal pyroglutamyl group from a polypeptide, the second amino acid generally not being Pro.. Its function is as follows. Removes 5-oxoproline from various penultimate amino acid residues except L-proline. The polypeptide is Pyrrolidone-carboxylate peptidase (Alkaliphilus oremlandii (strain OhILAs) (Clostridium oremlandii (strain OhILAs))).